Consider the following 1007-residue polypeptide: A disintegrin and metalloproteinase with thrombospondin motifs 1 (1007 aa).

An N-terminal signal peptide occupies residues 1-20 (MPCCLWAALSLLLAVVGAGA). 2 N-linked (GlcNAc...) asparagine glycosylation sites follow: Asn-130 and Asn-228. One can recognise a Peptidase M12B domain in the interval 184 to 370 (LWLELAIVAD…WSSCSKEQFH (187 aa)). Zn(2+) is bound at residue His-322. The Metal-binding signature appears at 322–333 (HELAHLLGLTHD). Glu-323 is a catalytic residue. His-326 and His-332 together coordinate Zn(2+). 4 disulfides stabilise this stretch: Cys-338–Cys-364, Cys-494–Cys-530, Cys-498–Cys-536, and Cys-509–Cys-520. The region spanning 482–537 (TPEWGDWEEWSACNADCGYGLRTRTRKCKYRGFVSESACEGAGSQVATCWAGSSCA) is the TSP type-1 1 domain. N-linked (GlcNAc...) asparagine glycans are attached at residues Asn-561, Asn-610, Asn-626, Asn-737, Asn-777, and Asn-865. TSP type-1 domains lie at 833 to 899 (CEFV…NRIP) and 900 to 952 (CPVY…RRCP). 3 disulfide bridges follow: Cys-912–Cys-946, Cys-916–Cys-951, and Cys-927–Cys-935.

Requires Zn(2+) as cofactor.

The protein resides in the secreted. The protein localises to the extracellular space. It localises to the extracellular matrix. In terms of biological role, involved in larval molting and metamorphosis. May degrade extracellular matrix (ECM) and basement membrane (BM) during the development of organs to allow degeneration and remodeling of tissues. The chain is A disintegrin and metalloproteinase with thrombospondin motifs 1 from Bombyx mori (Silk moth).